The chain runs to 335 residues: Protein-arginine kinase (335 aa).

One can recognise a Phosphagen kinase C-terminal domain in the interval 21–244; that stretch reads IVMSSRIRLA…NQIIHEEKQI (224 aa). ATP contacts are provided by residues 24 to 28, H82, R115, 166 to 170, and 197 to 202; these read SSRIR, RASVM, and RGIYGE.

It belongs to the ATP:guanido phosphotransferase family.

It carries out the reaction L-arginyl-[protein] + ATP = N(omega)-phospho-L-arginyl-[protein] + ADP + H(+). In terms of biological role, catalyzes the specific phosphorylation of arginine residues in proteins. The polypeptide is Protein-arginine kinase (Staphylococcus aureus (strain USA300)).